Consider the following 858-residue polypeptide: Heat shock protein 105 kDa (858 aa).

Serine 2 carries the N-acetylserine modification. Lysine 471 is subject to N6-acetyllysine. 2 disordered regions span residues 500 to 584 (KVPT…PPEA) and 796 to 858 (CEPV…MDLD). The span at 504-514 (EENEMSSEADM) shows a compositional bias: acidic residues. Phosphoserine is present on residues serine 509 and serine 510. Residues 532–554 (QQDNSEAGTQPQVQTDAQQTSQS) show a composition bias toward polar residues. Serine 557 is subject to Phosphoserine. At threonine 561 the chain carries Phosphothreonine. Basic and acidic residues-rich tracts occupy residues 563–584 (EENK…PPEA) and 805–814 (PKIESPKLER). Serine 809 carries the phosphoserine modification. Threonine 815 is subject to Phosphothreonine. Residues 821–832 (IDKKEEDLEDKN) are compositionally biased toward basic and acidic residues. Positions 849 to 858 (EKNSVNMDLD) are enriched in polar residues.

This sequence belongs to the heat shock protein 70 family. As to quaternary structure, interacts with HSPA8/HSC70. Interacts with HSPA1A (via NBD) and HSPA1B (via NBD). Phosphorylation on Ser-509 may be important for regulation of the HSPA8/HSC70 chaperone activity. Highly expressed in testis. Present at lower levels in most brain regions, except cerebellum. Overexpressed in cancer cells.

The protein localises to the cytoplasm. In terms of biological role, acts as a nucleotide-exchange factor (NEF) for chaperone proteins HSPA1A and HSPA1B, promoting the release of ADP from HSPA1A/B thereby triggering client/substrate protein release. Prevents the aggregation of denatured proteins in cells under severe stress, on which the ATP levels decrease markedly. Inhibits HSPA8/HSC70 ATPase and chaperone activities. In Homo sapiens (Human), this protein is Heat shock protein 105 kDa (HSPH1).